We begin with the raw amino-acid sequence, 300 residues long: Protein XRI1 (300 aa).

Interacts (via C-terminal domain) with MIP1.

The protein localises to the nucleus. Required for mitotic division of the generative cell nucleus and the development of mature tricellular pollen grains, and for male and female meiosis. This chain is Protein XRI1 (XRI1), found in Arabidopsis thaliana (Mouse-ear cress).